Consider the following 889-residue polypeptide: MADKTLNQIRTTFLDYFEKNDHKIVESSNLVPNNDPTLMFANSGMVQFKNIFTGLEKRDYVRATTSQKCVRAGGKHNDLENVGYTPRHHTFFEMLGNFSFGDYFKEEAISYAWNLITKEFGIDKNRLYVTVYHNDEEAFNFWKKIAGFSDDRIIKIATSDNFWSMGDTGPCGPCSEIFYDHGDHLEGGLPGTKNEDGNRFIEIWNLVFMQYEQISKDKRINLPKPSVDTGMGLERIAALLQGTHDNYETDHFKKLILSASDTLNVKVTDDNQSSFRVIADHLRASSFLLAEGVLPSNEGRGYVLRRIMRRGMRHSHLLGSKKPVFYNIFKTLLEEMSNNYPELERAQSLIKETLKTEEEKFLVLLDRGIKILNEELEKVEKILPGEVAFKLYDTFGFPLDLTEDILKNKSMTVDGEKFDLLMKESKKLAKKNWKGSGDSSVDQIWFDIKDRLGATDFLGYSTDKAEGVVTLILKNNKEVQDLQENDEGIIITNQTPFYGESGGQVADTGIISKEAFEFEVSDVQKKLGDLFVHYGKVKRGSVKLKDNVELKIDTQRRNNIRAYHSATHLLHEALRRVLGEHVTQKGSLVQSDRLRFDFSHMKPISDEEIRKIEHYVNSIIEKKSEVKTRIMTPKEAVENGALALFGEKYGDEVRVLSMGDEEGKFFSTELCGGTHVVNTADIGKFKIISQSSIAAGVRRVEALRDAQLIDFLKEKENQSNLSDQKNEAVIKELETKIIKLGGKPNLQNKDQVTLIKDLNRQFDQLSVISILKDKDKNKINDQTINGFKVRFQNIIDLPFKDLRKLIDEGKKEIGEGLVVIYAINDNKVGLAVGVTKTLEKKFDAVKIVRAGSEVIGGKGGGGRADFAQAGGTLPDKIEESFENIKKLIN.

Zn(2+)-binding residues include His564, His568, Cys671, and His675.

The protein belongs to the class-II aminoacyl-tRNA synthetase family. Requires Zn(2+) as cofactor.

It is found in the cytoplasm. It carries out the reaction tRNA(Ala) + L-alanine + ATP = L-alanyl-tRNA(Ala) + AMP + diphosphate. Functionally, catalyzes the attachment of alanine to tRNA(Ala) in a two-step reaction: alanine is first activated by ATP to form Ala-AMP and then transferred to the acceptor end of tRNA(Ala). Also edits incorrectly charged Ser-tRNA(Ala) and Gly-tRNA(Ala) via its editing domain. In Pelagibacter ubique (strain HTCC1062), this protein is Alanine--tRNA ligase.